Consider the following 576-residue polypeptide: CDPK-related kinase 1 (576 aa).

Residues 1–39 (MGICHGKPVEQQSKSLPVSGETNEAPTNSQPPAKSSGFP) form a disordered region. Gly-2 carries the N-myristoyl glycine lipid modification. Residues 10–33 (EQQSKSLPVSGETNEAPTNSQPPA) show a composition bias toward polar residues. A Protein kinase domain is found at 123 to 385 (YEIDGEVGRG…AAQALCHPWL (263 aa)). ATP-binding positions include 129–137 (VGRGHFGYT) and Lys-155. The active-site Proton acceptor is Asp-251. Phosphoserine is present on Ser-291. Ser-333 carries the post-translational modification Phosphoserine; by CPK1 and CPK34. The interval 390–420 (ELKIPSDMIIYKLVKVYIMSTSLRKSALAAL) is autoinhibitory domain. The interval 409–429 (STSLRKSALAALAKTLTVPQL) is calmodulin binding (CaMBD). EF-hand domains lie at 427–463 (PQLA…STDA), 464–499 (MKDS…VYQL), 500–539 (EAME…GPSV), and 542–571 (HVVL…VSSR). Ca(2+) is bound by residues Ser-442, Asn-444, Tyr-446, Lys-483, Glu-488, Asp-519, Asn-521, Glu-528, Asp-553, and Lys-555. Ser-557 is subject to Phosphoserine.

Belongs to the protein kinase superfamily. Ser/Thr protein kinase family. CDPK subfamily. In terms of assembly, binds calmodulin (CaM) in a calcium-dependent manner. Interacts with HSFA1A. Post-translationally, autophosphorylated.

It is found in the membrane. It carries out the reaction L-seryl-[protein] + ATP = O-phospho-L-seryl-[protein] + ADP + H(+). The enzyme catalyses L-threonyl-[protein] + ATP = O-phospho-L-threonyl-[protein] + ADP + H(+). Its activity is regulated as follows. Activated by calcium and calmodulin. Autophosphorylation may play an important role in the regulation of the kinase activity. May play a role in signal transduction pathways that involve calcium as a second messenger. Serine/threonine kinase that phosphorylates histone H3. Confers thermotolerance; involved in the heat-shock-mediated calmodulin-dependent signal transduction leading to the activation of heat-shock transcription factors (HSFs); phosphorylates HSFA1A. The sequence is that of CDPK-related kinase 1 (CRK1) from Arabidopsis thaliana (Mouse-ear cress).